A 437-amino-acid polypeptide reads, in one-letter code: Homogentisate 1,2-dioxygenase (437 aa).

Histidine 295 serves as the catalytic Proton acceptor. 2 residues coordinate Fe cation: histidine 338 and glutamate 344. Positions 353 and 374 each coordinate homogentisate. Histidine 374 contacts Fe cation.

It belongs to the homogentisate dioxygenase family. In terms of assembly, hexamer; dimer of trimers. The cofactor is Fe cation.

It carries out the reaction homogentisate + O2 = 4-maleylacetoacetate + H(+). Its pathway is amino-acid degradation; L-phenylalanine degradation; acetoacetate and fumarate from L-phenylalanine: step 4/6. Functionally, involved in the catabolism of homogentisate (2,5-dihydroxyphenylacetate or 2,5-OH-PhAc), a central intermediate in the degradation of phenylalanine and tyrosine. Catalyzes the oxidative ring cleavage of the aromatic ring of homogentisate to yield maleylacetoacetate. The protein is Homogentisate 1,2-dioxygenase of Myxococcus xanthus (strain DK1622).